A 730-amino-acid chain; its full sequence is 1,4-alpha-glucan branching enzyme GlgB (730 aa).

Asp405 functions as the Nucleophile in the catalytic mechanism. Glu458 functions as the Proton donor in the catalytic mechanism.

This sequence belongs to the glycosyl hydrolase 13 family. GlgB subfamily. In terms of assembly, monomer.

It carries out the reaction Transfers a segment of a (1-&gt;4)-alpha-D-glucan chain to a primary hydroxy group in a similar glucan chain.. It participates in glycan biosynthesis; glycogen biosynthesis. Functionally, catalyzes the formation of the alpha-1,6-glucosidic linkages in glycogen by scission of a 1,4-alpha-linked oligosaccharide from growing alpha-1,4-glucan chains and the subsequent attachment of the oligosaccharide to the alpha-1,6 position. This chain is 1,4-alpha-glucan branching enzyme GlgB, found in Haemophilus influenzae (strain PittGG).